The chain runs to 308 residues: Glycine-rich protein GRP33 (308 aa).

One can recognise a KH domain in the interval 83 to 118 (DQFPKYNFLGKLLGPGGSTMKQLQDETMTKISILGR). Composition is skewed to gly residues over residues 203 to 220 (GPMG…GGFS) and 273 to 294 (RGAG…GGGK). Disordered stretches follow at residues 203–222 (GPMG…FSGP) and 270–308 (SPGR…AAPY).

The arginines in the Gly-rich domain might be methylated.

In Artemia salina (Brine shrimp), this protein is Glycine-rich protein GRP33.